A 92-amino-acid polypeptide reads, in one-letter code: Acylphosphatase (92 aa).

The region spanning 5–92 is the Acylphosphatase-like domain; sequence RWHLLVSGKV…QEFTDFRTTH (88 aa). Residues Arg-20 and Asn-38 contribute to the active site.

This sequence belongs to the acylphosphatase family.

It carries out the reaction an acyl phosphate + H2O = a carboxylate + phosphate + H(+). The chain is Acylphosphatase (acyP) from Marinobacter nauticus (strain ATCC 700491 / DSM 11845 / VT8) (Marinobacter aquaeolei).